The following is a 192-amino-acid chain: Ion-translocating oxidoreductase complex subunit B (192 aa).

Residues 1–26 are hydrophobic; the sequence is MSAVWIAVIAISLLGLIFGLILGYAS. Positions 32–91 constitute a 4Fe-4S domain; the sequence is QDDPVVEKIDELLPQSQCGQCGYPGCRPYAEAVGAQGEKINRCAPGGEAVMLKIAALLNV. [4Fe-4S] cluster is bound by residues C49, C52, C57, C74, C117, C120, C123, C127, C147, C150, C153, and C157. 2 consecutive 4Fe-4S ferredoxin-type domains span residues 108 to 137 and 138 to 167; these read MLAVIDEPNCIGCTKCIQACPVDAIVGATR and AMHTVMNDLCTGCNLCVAPCPTQCISLVPV.

The protein belongs to the 4Fe4S bacterial-type ferredoxin family. RnfB subfamily. As to quaternary structure, the complex is composed of six subunits: RnfA, RnfB, RnfC, RnfD, RnfE and RnfG. It depends on [4Fe-4S] cluster as a cofactor.

It localises to the cell inner membrane. In terms of biological role, part of a membrane-bound complex that couples electron transfer with translocation of ions across the membrane. This is Ion-translocating oxidoreductase complex subunit B from Klebsiella pneumoniae (strain 342).